The following is a 262-amino-acid chain: Hydroxyethylthiazole kinase (262 aa).

Met-50 lines the substrate pocket. 2 residues coordinate ATP: Arg-125 and Thr-171. Residue Gly-198 participates in substrate binding.

It belongs to the Thz kinase family. The cofactor is Mg(2+).

The catalysed reaction is 5-(2-hydroxyethyl)-4-methylthiazole + ATP = 4-methyl-5-(2-phosphooxyethyl)-thiazole + ADP + H(+). It participates in cofactor biosynthesis; thiamine diphosphate biosynthesis; 4-methyl-5-(2-phosphoethyl)-thiazole from 5-(2-hydroxyethyl)-4-methylthiazole: step 1/1. Catalyzes the phosphorylation of the hydroxyl group of 4-methyl-5-beta-hydroxyethylthiazole (THZ). The chain is Hydroxyethylthiazole kinase from Escherichia coli O17:K52:H18 (strain UMN026 / ExPEC).